A 52-amino-acid chain; its full sequence is Large ribosomal subunit protein eL39 (52 aa).

Belongs to the eukaryotic ribosomal protein eL39 family.

The chain is Large ribosomal subunit protein eL39 from Caldivirga maquilingensis (strain ATCC 700844 / DSM 13496 / JCM 10307 / IC-167).